We begin with the raw amino-acid sequence, 396 residues long: Tryptophan synthase beta chain 1 (396 aa).

N6-(pyridoxal phosphate)lysine is present on Lys-86.

The protein belongs to the TrpB family. In terms of assembly, tetramer of two alpha and two beta chains. Pyridoxal 5'-phosphate is required as a cofactor.

The catalysed reaction is (1S,2R)-1-C-(indol-3-yl)glycerol 3-phosphate + L-serine = D-glyceraldehyde 3-phosphate + L-tryptophan + H2O. It participates in amino-acid biosynthesis; L-tryptophan biosynthesis; L-tryptophan from chorismate: step 5/5. Functionally, the beta subunit is responsible for the synthesis of L-tryptophan from indole and L-serine. The protein is Tryptophan synthase beta chain 1 (trpB1) of Vibrio parahaemolyticus serotype O3:K6 (strain RIMD 2210633).